The following is a 147-amino-acid chain: Large ribosomal subunit protein uL13 (147 aa).

Belongs to the universal ribosomal protein uL13 family. As to quaternary structure, part of the 50S ribosomal subunit.

In terms of biological role, this protein is one of the early assembly proteins of the 50S ribosomal subunit, although it is not seen to bind rRNA by itself. It is important during the early stages of 50S assembly. This Nocardia farcinica (strain IFM 10152) protein is Large ribosomal subunit protein uL13.